Consider the following 405-residue polypeptide: Arginine biosynthesis bifunctional protein ArgJ, mitochondrial (405 aa).

Residues Thr-174, Lys-200, Thr-211, and Glu-300 each coordinate substrate. Thr-211 (nucleophile) is an active-site residue.

The protein belongs to the ArgJ family. In terms of assembly, heterodimer of an alpha and a beta chain. Post-translationally, the alpha and beta chains are autoproteolytically processed from a single precursor protein within the mitochondrion.

It localises to the mitochondrion matrix. It catalyses the reaction N(2)-acetyl-L-ornithine + L-glutamate = N-acetyl-L-glutamate + L-ornithine. It carries out the reaction L-glutamate + acetyl-CoA = N-acetyl-L-glutamate + CoA + H(+). It functions in the pathway amino-acid biosynthesis; L-arginine biosynthesis; L-ornithine and N-acetyl-L-glutamate from L-glutamate and N(2)-acetyl-L-ornithine (cyclic): step 1/1. Its pathway is amino-acid biosynthesis; L-arginine biosynthesis; N(2)-acetyl-L-ornithine from L-glutamate: step 1/4. Catalyzes two activities which are involved in the cyclic version of arginine biosynthesis: the synthesis of acetylglutamate from glutamate and acetyl-CoA, and of ornithine by transacetylation between acetylornithine and glutamate. This chain is Arginine biosynthesis bifunctional protein ArgJ, mitochondrial, found in Candida tropicalis (strain ATCC MYA-3404 / T1) (Yeast).